The following is a 246-amino-acid chain: Proteasome subunit alpha type-6-A (246 aa).

The protein belongs to the peptidase T1A family. Component of the 20S core complex of the 26S proteasome. The 26S proteasome is composed of a core protease (CP), known as the 20S proteasome, capped at one or both ends by the 19S regulatory particle (RP/PA700). The 20S proteasome core is composed of 28 subunits that are arranged in four stacked rings, resulting in a barrel-shaped structure. The two end rings are each formed by seven alpha subunits, and the two central rings are each formed by seven beta subunits. The catalytic chamber with the active sites is on the inside of the barrel. Ubiquitous low levels, higher expression in siliques and flowers.

It localises to the cytoplasm. Its subcellular location is the nucleus. The proteasome is a multicatalytic proteinase complex which is characterized by its ability to cleave peptides with Arg, Phe, Tyr, Leu, and Glu adjacent to the leaving group at neutral or slightly basic pH. The proteasome has an ATP-dependent proteolytic activity. In Arabidopsis thaliana (Mouse-ear cress), this protein is Proteasome subunit alpha type-6-A (PAA1).